Reading from the N-terminus, the 57-residue chain is High-potential iron-sulfur protein (57 aa).

4 residues coordinate [4Fe-4S] cluster: Cys-21, Cys-24, Cys-33, and Cys-46.

It belongs to the high-potential iron-sulfur protein (HiPIP) family. As to quaternary structure, homodimer.

Functionally, specific class of high-redox-potential 4Fe-4S ferredoxins. Functions in anaerobic electron transport in most purple and in some other photosynthetic bacteria and in at least one genus (Paracoccus) of halophilic, denitrifying bacteria. In Rhodopila globiformis (Rhodopseudomonas globiformis), this protein is High-potential iron-sulfur protein (hip).